We begin with the raw amino-acid sequence, 332 residues long: L-lactate dehydrogenase A chain (332 aa).

NAD(+) is bound by residues 29–57 (GMVG…MEDK) and Arg99. Arg106, Asn138, and Arg169 together coordinate substrate. Asn138 lines the NAD(+) pocket. His193 functions as the Proton acceptor in the catalytic mechanism. A substrate-binding site is contributed by Thr248.

The protein belongs to the LDH/MDH superfamily. LDH family. As to quaternary structure, homotetramer.

The protein resides in the cytoplasm. The enzyme catalyses (S)-lactate + NAD(+) = pyruvate + NADH + H(+). It functions in the pathway fermentation; pyruvate fermentation to lactate; (S)-lactate from pyruvate: step 1/1. Its function is as follows. Interconverts simultaneously and stereospecifically pyruvate and lactate with concomitant interconversion of NADH and NAD(+). The sequence is that of L-lactate dehydrogenase A chain (ldha) from Sphyraena argentea (Pacific barracuda).